Here is a 183-residue protein sequence, read N- to C-terminus: MSSLDNLVAEILQQAEKEANRILVKVKAENLEFTENENKKIQKEIENIQWKTNEEAISLKERIISNANLKSRDMVLQAKEELVDKVLKMTLERLKNLDSDSYLDFVENALKTLNISKNAEIILTKKMKDVLGKEIFGYKVSDDIVESGCNIKDGNVIYNNEFSSLLEFNKEDLEREILKKIFG.

It belongs to the V-ATPase E subunit family.

In terms of biological role, produces ATP from ADP in the presence of a proton gradient across the membrane. The protein is V-type ATP synthase subunit E of Fusobacterium nucleatum subsp. nucleatum (strain ATCC 25586 / DSM 15643 / BCRC 10681 / CIP 101130 / JCM 8532 / KCTC 2640 / LMG 13131 / VPI 4355).